The following is a 162-amino-acid chain: MVWIDYAIIAVIAFSSLVSLIRGFVREALSLVTWGCAFFVASHYYTYLSVWFTGFEDELVRNGIAIAVLFIATLIVGAIVNFVIGQLVEKTGLSGTDRVLGVCFGALRGVLIVAAILFFLDSFTGVSKSEDWSKSQLIPQFSFIIRCFFDYLQSSSSFLPRA.

The helical transmembrane segment at 1-21 (MVWIDYAIIAVIAFSSLVSLI) threads the bilayer. Over 22–31 (RGFVREALSL) the chain is Cytoplasmic. Residues 32 to 52 (VTWGCAFFVASHYYTYLSVWF) traverse the membrane as a helical segment. The Periplasmic segment spans residues 53-63 (TGFEDELVRNG). A helical membrane pass occupies residues 64–84 (IAIAVLFIATLIVGAIVNFVI). Topologically, residues 85–98 (GQLVEKTGLSGTDR) are cytoplasmic. The helical transmembrane segment at 99–119 (VLGVCFGALRGVLIVAAILFF) threads the bilayer. Residues 120–162 (LDSFTGVSKSEDWSKSQLIPQFSFIIRCFFDYLQSSSSFLPRA) are Periplasmic-facing.

It is found in the cell inner membrane. Its function is as follows. Required for colicin V production from plasmid IncFI ColV3-K30. This chain is Colicin V production protein (cvpA), found in Escherichia coli (strain K12).